The chain runs to 160 residues: 6,7-dimethyl-8-ribityllumazine synthase (160 aa).

5-amino-6-(D-ribitylamino)uracil is bound by residues Trp-26, 58–60, and 80–82; these read AIE and VVI. 85–86 lines the (2S)-2-hydroxy-3-oxobutyl phosphate pocket; sequence ET. His-88 serves as the catalytic Proton donor. Asn-113 serves as a coordination point for 5-amino-6-(D-ribitylamino)uracil. Residue Arg-127 participates in (2S)-2-hydroxy-3-oxobutyl phosphate binding.

Belongs to the DMRL synthase family. Homopentamer.

The catalysed reaction is (2S)-2-hydroxy-3-oxobutyl phosphate + 5-amino-6-(D-ribitylamino)uracil = 6,7-dimethyl-8-(1-D-ribityl)lumazine + phosphate + 2 H2O + H(+). It functions in the pathway cofactor biosynthesis; riboflavin biosynthesis; riboflavin from 2-hydroxy-3-oxobutyl phosphate and 5-amino-6-(D-ribitylamino)uracil: step 1/2. Catalyzes the formation of 6,7-dimethyl-8-ribityllumazine by condensation of 5-amino-6-(D-ribitylamino)uracil with 3,4-dihydroxy-2-butanone 4-phosphate. This is the penultimate step in the biosynthesis of riboflavin. In Mycobacteroides abscessus (strain ATCC 19977 / DSM 44196 / CCUG 20993 / CIP 104536 / JCM 13569 / NCTC 13031 / TMC 1543 / L948) (Mycobacterium abscessus), this protein is 6,7-dimethyl-8-ribityllumazine synthase.